The chain runs to 953 residues: 26S proteasome non-ATPase regulatory subunit 1 (953 aa).

M1 is modified (N-acetylmethionine). T273 is modified (phosphothreonine). The disordered stretch occupies residues 279–318; sequence PGSTNTGTVPGSEKDSDSMETEEKTSSAFVGKTPEASPEP. At S290 the chain carries Phosphoserine. Positions 290–303 are enriched in basic and acidic residues; that stretch reads SEKDSDSMETEEKT. K310 is modified (N6-acetyllysine). A Phosphothreonine modification is found at T311. S315 is subject to Phosphoserine. PC repeat units follow at residues 403–436, 441–474, 476–510, 511–545, 547–580, 581–616, 617–649, 651–685, 686–726, and 729–761; these read TATASLGVIHKGHEKEALQLMATYLPKDTSPGSA, GGLYALGLIHANHGGDIIDYLLNQLKNASNDIVR, GGSLGLGLAAMGTARQDVYDLLKTNLYQDDAVTGE, AAGLALGLVMLGSKNAQAIEDMVGYAQETQHEKIL, GLAVGIALVMYGRMEEADALIESLCRDKDPILRR, SGMYTVAMAYCGSGNNKAIRRLLHVAVSDVNDDVRR, AAVESLGFILFRTPEQCPSVVSLLSESYNPHVR, GAAMALGICCAGTGNKEAINLLEPMTNDPVNYVRQ, GALI…DVMA, and GAILAQGILDAGGHNVTISLQSRTGHTHMPSVV. The residue at position 720 (K720) is an N6-acetyllysine. Position 830 is a phosphothreonine (T830). S834 carries the phosphoserine modification. 2 disordered regions span residues 839–881 and 930–953; these read AKKK…LDNP and AHGPKIEEEEQEPEPPEPFEYIDD. 2 stretches are compositionally biased toward basic and acidic residues: residues 842–852 and 859–872; these read KEKEKEKKEEE and AEKKEEKEKKKEPE. Acidic residues predominate over residues 936-953; that stretch reads EEEEQEPEPPEPFEYIDD.

The protein belongs to the proteasome subunit S1 family. As to quaternary structure, component of the 19S proteasome regulatory particle complex. The 26S proteasome consists of a 20S core particle (CP) and two 19S regulatory subunits (RP). The regulatory particle is made of a lid composed of 9 subunits, a base containing 6 ATPases and few additional components including PSMD1. Interacts with ADRM1. Interacts with ZFAND1.

Component of the 26S proteasome, a multiprotein complex involved in the ATP-dependent degradation of ubiquitinated proteins. This complex plays a key role in the maintenance of protein homeostasis by removing misfolded or damaged proteins, which could impair cellular functions, and by removing proteins whose functions are no longer required. Therefore, the proteasome participates in numerous cellular processes, including cell cycle progression, apoptosis, or DNA damage repair. In Homo sapiens (Human), this protein is 26S proteasome non-ATPase regulatory subunit 1 (PSMD1).